The sequence spans 433 residues: C2H2 type master regulator of conidiophore development brlA (433 aa).

3 disordered regions span residues 24 to 49 (SDCP…LYSQ), 240 to 269 (KSHT…ISGH), and 286 to 306 (MMQR…LRSN). The span at 30–49 (TSSFSPLDSPTPTPTSLYSQ) shows a compositional bias: low complexity. Positions 240–264 (KSHTPSTPHRSVSMGTPSGSDTPVS) are enriched in polar residues. Residues 288-302 (QRHRQPSRKPSKKQL) are compositionally biased toward basic residues. 2 consecutive C2H2-type zinc fingers follow at residues 321–345 (FKCK…MKSH) and 351–376 (HVCW…TKTH). Positions 391 to 423 (ETSQDFDPDFRGQLTPDGRPIYGSKLEDSMPDC) are disordered.

The protein localises to the nucleus. Functionally, brlA, abaA and wetA are pivotal regulators of conidiophore development and conidium maturation. They act individually and together to regulate their own expression and that of numerous other sporulation-specific genes. Binds promoters of target genes at brlA response elements (BREs) containing the conserved sequence 5'-(C/A)(A/G)AGGG(G/A)-3'. Regulates genes involved in conidiogenesis. In Penicillium digitatum (strain PHI26 / CECT 20796) (Green mold), this protein is C2H2 type master regulator of conidiophore development brlA.